Consider the following 483-residue polypeptide: 3-isopropylmalate dehydratase large subunit (483 aa).

Positions 361, 424, and 427 each coordinate [4Fe-4S] cluster.

This sequence belongs to the aconitase/IPM isomerase family. LeuC type 1 subfamily. Heterodimer of LeuC and LeuD. [4Fe-4S] cluster serves as cofactor.

It catalyses the reaction (2R,3S)-3-isopropylmalate = (2S)-2-isopropylmalate. It participates in amino-acid biosynthesis; L-leucine biosynthesis; L-leucine from 3-methyl-2-oxobutanoate: step 2/4. In terms of biological role, catalyzes the isomerization between 2-isopropylmalate and 3-isopropylmalate, via the formation of 2-isopropylmaleate. The sequence is that of 3-isopropylmalate dehydratase large subunit from Polaromonas naphthalenivorans (strain CJ2).